A 598-amino-acid polypeptide reads, in one-letter code: Membrane protein insertase YidC (598 aa).

Residues 7 to 27 (NYFIAIALSVLIVLGWQFLYM) form a helical membrane-spanning segment. A disordered region spans residues 37-71 (AQEAQKAQQQTEQVQQPAAGGATPAPASGTAPSGQ). Low complexity predominate over residues 40-71 (AQKAQQQTEQVQQPAAGGATPAPASGTAPSGQ). 4 helical membrane passes run 373-393 (FFGNFGVAILCTTIVVKALFF), 447-467 (WPVALQIPIFFSLYKVIYITI), 492-512 (LFGLLPFTAPTFLHLGVWPLI), and 538-558 (WMPLVFMFMLASFPAGLVIYW).

Belongs to the OXA1/ALB3/YidC family. Type 1 subfamily. As to quaternary structure, interacts with the Sec translocase complex via SecD. Specifically interacts with transmembrane segments of nascent integral membrane proteins during membrane integration.

The protein resides in the cell inner membrane. Functionally, required for the insertion and/or proper folding and/or complex formation of integral membrane proteins into the membrane. Involved in integration of membrane proteins that insert both dependently and independently of the Sec translocase complex, as well as at least some lipoproteins. Aids folding of multispanning membrane proteins. This Rhizobium etli (strain CIAT 652) protein is Membrane protein insertase YidC.